The chain runs to 695 residues: Threonine--tRNA ligase (695 aa).

Positions 1–66 constitute a TGS domain; the sequence is MSAPARPAPA…DTDVEVTPVA (66 aa). A catalytic region spans residues 263–569; it reads DHRKLGVELD…LTEHYAGAFP (307 aa). Zn(2+)-binding residues include Cys368, His419, and His546.

This sequence belongs to the class-II aminoacyl-tRNA synthetase family. Homodimer. Zn(2+) serves as cofactor.

The protein localises to the cytoplasm. It carries out the reaction tRNA(Thr) + L-threonine + ATP = L-threonyl-tRNA(Thr) + AMP + diphosphate + H(+). In terms of biological role, catalyzes the attachment of threonine to tRNA(Thr) in a two-step reaction: L-threonine is first activated by ATP to form Thr-AMP and then transferred to the acceptor end of tRNA(Thr). Also edits incorrectly charged L-seryl-tRNA(Thr). The polypeptide is Threonine--tRNA ligase (Mycolicibacterium gilvum (strain PYR-GCK) (Mycobacterium gilvum (strain PYR-GCK))).